A 126-amino-acid chain; its full sequence is MIVIFVGLAGVLGALMRFGLDSFFAQRGRFAHGQAHHFPLATLSVNVLGSFIIGLAGGFASHAELSPDWHSAISIGIAGGLTTFSSFAVATVSLWQLGNKFSAMVNIGLNLVLGLGAAWLGLSLAA.

The next 4 helical transmembrane spans lie at 1-21, 40-60, 72-92, and 104-124; these read MIVI…FGLD, LATL…GGFA, AISI…VATV, and MVNI…GLSL. Residues glycine 79 and threonine 82 each coordinate Na(+).

Belongs to the fluoride channel Fluc/FEX (TC 1.A.43) family.

It is found in the cell membrane. It catalyses the reaction fluoride(in) = fluoride(out). Na(+) is not transported, but it plays an essential structural role and its presence is essential for fluoride channel function. Fluoride-specific ion channel. Important for reducing fluoride concentration in the cell, thus reducing its toxicity. This is Fluoride-specific ion channel FluC from Renibacterium salmoninarum (strain ATCC 33209 / DSM 20767 / JCM 11484 / NBRC 15589 / NCIMB 2235).